Reading from the N-terminus, the 393-residue chain is Beta-1,3-galactosyltransferase 7 (393 aa).

A helical; Signal-anchor for type II membrane protein transmembrane segment spans residues 9–29 (VISLKWVPFLCISFFALGAIF). The tract at residues 89-112 (SLDKSVSTLSSTRSSQEMVDGSET) is disordered. The span at 93–103 (SVSTLSSTRSS) shows a compositional bias: low complexity.

It belongs to the glycosyltransferase 31 family. Requires Mn(2+) as cofactor. Expressed in leaves, stems, flowers and siliques.

It is found in the golgi apparatus membrane. It participates in protein modification; protein glycosylation. Its function is as follows. Beta-1,3-galactosyltransferase that transfers galactose from UDP-galactose to substrates with a terminal glycosyl residue. The protein is Beta-1,3-galactosyltransferase 7 (B3GALT7) of Arabidopsis thaliana (Mouse-ear cress).